We begin with the raw amino-acid sequence, 596 residues long: V-type ATP synthase alpha chain (596 aa).

Residue 233–240 (GPFGAGKT) coordinates ATP.

The protein belongs to the ATPase alpha/beta chains family.

The enzyme catalyses ATP + H2O + 4 H(+)(in) = ADP + phosphate + 5 H(+)(out). In terms of biological role, produces ATP from ADP in the presence of a proton gradient across the membrane. The V-type alpha chain is a catalytic subunit. This is V-type ATP synthase alpha chain from Streptococcus gordonii (strain Challis / ATCC 35105 / BCRC 15272 / CH1 / DL1 / V288).